Consider the following 353-residue polypeptide: Alanine racemase (353 aa).

Residue Lys33 is the Proton acceptor; specific for D-alanine of the active site. At Lys33 the chain carries N6-(pyridoxal phosphate)lysine. Residue Arg129 coordinates substrate. Tyr250 functions as the Proton acceptor; specific for L-alanine in the catalytic mechanism. Residue Met298 coordinates substrate.

It belongs to the alanine racemase family. Pyridoxal 5'-phosphate is required as a cofactor.

The enzyme catalyses L-alanine = D-alanine. It functions in the pathway amino-acid biosynthesis; D-alanine biosynthesis; D-alanine from L-alanine: step 1/1. Its function is as follows. Catalyzes the interconversion of L-alanine and D-alanine. May also act on other amino acids. The polypeptide is Alanine racemase (alr) (Aromatoleum aromaticum (strain DSM 19018 / LMG 30748 / EbN1) (Azoarcus sp. (strain EbN1))).